The sequence spans 129 residues: Ribosome-binding factor A (129 aa).

The protein belongs to the RbfA family. Monomer. Binds 30S ribosomal subunits, but not 50S ribosomal subunits or 70S ribosomes.

The protein resides in the cytoplasm. Functionally, one of several proteins that assist in the late maturation steps of the functional core of the 30S ribosomal subunit. Associates with free 30S ribosomal subunits (but not with 30S subunits that are part of 70S ribosomes or polysomes). Required for efficient processing of 16S rRNA. May interact with the 5'-terminal helix region of 16S rRNA. The protein is Ribosome-binding factor A of Stutzerimonas stutzeri (strain A1501) (Pseudomonas stutzeri).